We begin with the raw amino-acid sequence, 502 residues long: Cytochrome P450 monooxygenase orf6 (502 aa).

The chain crosses the membrane as a helical span at residues 3–25 (ALWVLAVALVAYFLCLSIYRLFL). Asn-382 carries N-linked (GlcNAc...) asparagine glycosylation. Cys-445 provides a ligand contact to heme.

Belongs to the cytochrome P450 family. Heme serves as cofactor.

Its subcellular location is the membrane. It participates in mycotoxin biosynthesis. Cytochrome P450 monooxygenase; part of the gene cluster that mediates the biosynthesis of brefeldin A (BFA), a protein transport inhibitor that shows antiviral, antifungal, and antitumor properties. The proposed biosynthesis of BFA involves formation of an acyclic polyketide chain that is differentially tailored throughout the backbone. The highly reducing polyketide synthase Bref-PKS is proposed to synthesize the precisely reduced octaketide precursor, which could then be directly offloaded by the thiohydrolase enzyme Bref-TH followed by a cytochrome P450 monooxygenase-mediated formation of the cyclopentane ring and macrocyclization to afford 7-deoxy BFA. Alternatively, the first ring annulation can also occur on the ACP-tethered intermediate before the thiohydrolase release and lactonization. The C7-hydroxylation by another cytochrome P450 monooxygenase is believed to be the final step in the process to obtain the final structure of BFA. In addition to the HRPKS Bref-PKS and the thiohydrolase Bref-TH, the brefeldin A biosynthesis cluster contains 4 cytochrome p450 monooxygenases (called orf3 to orf6), as well a the probable cluster-specific transcription regulator orf8. The polypeptide is Cytochrome P450 monooxygenase orf6 (Eupenicillium brefeldianum (Penicillium brefeldianum)).